Reading from the N-terminus, the 220-residue chain is LHFPL tetraspan subfamily member 1 protein (220 aa).

The signal sequence occupies residues 1–20 (MRSSLTMVGTLWAFLSLVTA). 2 consecutive transmembrane segments (helical) span residues 86–106 (VVTG…VLGC) and 122–142 (AAQF…PLGW). Residue N153 is glycosylated (N-linked (GlcNAc...) asparagine). The helical transmembrane segment at 165 to 185 (LGWAYYCAGGGAAAAMLICTW) threads the bilayer.

The protein belongs to the LHFP family. In terms of tissue distribution, widely expressed. Expressed at high levels in lung, thymus, skeletal muscle, colon and ovary.

Its subcellular location is the membrane. The polypeptide is LHFPL tetraspan subfamily member 1 protein (Homo sapiens (Human)).